A 733-amino-acid polypeptide reads, in one-letter code: Fibronectin type III domain-containing protein 7 (733 aa).

The first 25 residues, 1-25 (MAGGRETCLPLIGFILICLKMVASA), serve as a signal peptide directing secretion. 8 Fibronectin type-III domains span residues 28–115 (APEI…TVLA), 116–202 (APIL…TSPR), 203–288 (APAN…TVAC), 289–373 (APGR…TAPC), 374–459 (CPSD…TAPC), 460–544 (SPEI…TVPC), 545–632 (CPTG…CCPL), and 631–715 (PLGV…YSVT). N-linked (GlcNAc...) asparagine glycosylation occurs at N230. N433 is a glycosylation site (N-linked (GlcNAc...) asparagine).

It localises to the secreted. The sequence is that of Fibronectin type III domain-containing protein 7 (FNDC7) from Homo sapiens (Human).